The following is a 372-amino-acid chain: F-box/kelch-repeat protein At4g14905 (372 aa).

An F-box domain is found at Leu34 to Arg74. 3 Kelch repeats span residues Glu137–Gly183, Lys184–Met229, and Lys232–Gln280.

The chain is F-box/kelch-repeat protein At4g14905 from Arabidopsis thaliana (Mouse-ear cress).